Here is a 95-residue protein sequence, read N- to C-terminus: Co-chaperonin GroES (95 aa).

The protein belongs to the GroES chaperonin family. In terms of assembly, heptamer of 7 subunits arranged in a ring. Interacts with the chaperonin GroEL.

The protein localises to the cytoplasm. Its function is as follows. Together with the chaperonin GroEL, plays an essential role in assisting protein folding. The GroEL-GroES system forms a nano-cage that allows encapsulation of the non-native substrate proteins and provides a physical environment optimized to promote and accelerate protein folding. GroES binds to the apical surface of the GroEL ring, thereby capping the opening of the GroEL channel. This chain is Co-chaperonin GroES, found in Jannaschia sp. (strain CCS1).